A 280-amino-acid chain; its full sequence is DCN1-like protein 4 (280 aa).

Residues 37–71 (GPESHGTACCSRAMPPRKKRRPTAGDDLSAKKSRQ) are disordered. Positions 89–275 (FSSKRCLEWF…LLDEFVEWYK (187 aa)) constitute a DCUN1 domain.

In terms of assembly, may interact (via the DCUN1 domain) with unneddylated cullins.

It is found in the nucleus. Functionally, contributes to the neddylation of all cullins by transferring NEDD8 from N-terminally acetylated NEDD8-conjugating E2s enzyme to different cullin C-terminal domain-RBX complexes. This chain is DCN1-like protein 4, found in Danio rerio (Zebrafish).